A 272-amino-acid chain; its full sequence is Centromere protein V-like protein 3 (272 aa).

Positions 1–17 (MGRVRNRATAQRRRRKR) are enriched in basic residues. 2 disordered regions span residues 1-23 (MGRV…DPPA) and 65-95 (RRAR…KELD). Residues 77 to 88 (PSAPLPDPPAPA) show a composition bias toward pro residues. In terms of domain architecture, CENP-V/GFA spans 133-246 (HTGGCHCGAV…EEVGGGDPGE (114 aa)). Positions 137, 139, 157, 159, 162, 201, and 204 each coordinate Zn(2+). Residues 240–272 (GGGDPGEEAAEEHKAIHKTSSQSAPACPREQEQ) form a disordered region.

The protein belongs to the Gfa family. Zn(2+) is required as a cofactor.

The chain is Centromere protein V-like protein 3 from Homo sapiens (Human).